The primary structure comprises 154 residues: uncharacterized protein (154 aa).

A signal peptide spans 1–33; the sequence is MTKRGIQAFAGGIILATAVLAAVFYLTDEDQAA.

This is an uncharacterized protein from Bacillus subtilis (strain 168).